Consider the following 208-residue polypeptide: Large ribosomal subunit protein uL4 (208 aa).

Residues valine 50–lysine 83 are disordered.

Belongs to the universal ribosomal protein uL4 family. In terms of assembly, part of the 50S ribosomal subunit.

In terms of biological role, one of the primary rRNA binding proteins, this protein initially binds near the 5'-end of the 23S rRNA. It is important during the early stages of 50S assembly. It makes multiple contacts with different domains of the 23S rRNA in the assembled 50S subunit and ribosome. Functionally, forms part of the polypeptide exit tunnel. The polypeptide is Large ribosomal subunit protein uL4 (Mycoplasma capricolum subsp. capricolum (strain California kid / ATCC 27343 / NCTC 10154)).